The following is a 393-amino-acid chain: NADH-quinone oxidoreductase subunit D (393 aa).

The protein belongs to the complex I 49 kDa subunit family. NDH-1 is composed of 14 different subunits. Subunits NuoB, C, D, E, F, and G constitute the peripheral sector of the complex.

The protein resides in the cell inner membrane. It carries out the reaction a quinone + NADH + 5 H(+)(in) = a quinol + NAD(+) + 4 H(+)(out). In terms of biological role, NDH-1 shuttles electrons from NADH, via FMN and iron-sulfur (Fe-S) centers, to quinones in the respiratory chain. The immediate electron acceptor for the enzyme in this species is believed to be ubiquinone. Couples the redox reaction to proton translocation (for every two electrons transferred, four hydrogen ions are translocated across the cytoplasmic membrane), and thus conserves the redox energy in a proton gradient. The protein is NADH-quinone oxidoreductase subunit D of Ehrlichia canis (strain Jake).